Reading from the N-terminus, the 68-residue chain is Metallothionein (68 aa).

The protein belongs to the metallothionein superfamily. Type 4 family.

Functionally, metallothioneins have a high content of cysteine residues that bind various heavy metals. This is Metallothionein (MT1) from Lytechinus pictus (Painted sea urchin).